Here is a 157-residue protein sequence, read N- to C-terminus: 3-hydroxybutyryl-CoA dehydratase (157 aa).

The region spanning 22 to 120 is the MaoC-like domain; it reads KKEISSSDVV…IPERRRARLA (99 aa).

The catalysed reaction is (3R)-3-hydroxybutanoyl-CoA = (2E)-butenoyl-CoA + H2O. Functionally, involved in the regeneration of glyoxylate from a molecule of acetyl-CoA. In Methylorubrum extorquens (strain ATCC 14718 / DSM 1338 / JCM 2805 / NCIMB 9133 / AM1) (Methylobacterium extorquens), this protein is 3-hydroxybutyryl-CoA dehydratase.